The sequence spans 459 residues: tRNA modification GTPase MnmE (459 aa).

Residues R20, E85, and R124 each contribute to the (6S)-5-formyl-5,6,7,8-tetrahydrofolate site. The TrmE-type G domain occupies 221-380 (GLSTVIIGRP…LEMAIQSLFF (160 aa)). N231 provides a ligand contact to K(+). GTP-binding positions include 231-236 (NVGKSS), 250-256 (TDIPGTT), and 275-278 (DTAG). Residue S235 participates in Mg(2+) binding. Residues T250, I252, and T255 each coordinate K(+). T256 is a binding site for Mg(2+). K459 is a binding site for (6S)-5-formyl-5,6,7,8-tetrahydrofolate.

This sequence belongs to the TRAFAC class TrmE-Era-EngA-EngB-Septin-like GTPase superfamily. TrmE GTPase family. In terms of assembly, homodimer. Heterotetramer of two MnmE and two MnmG subunits. It depends on K(+) as a cofactor.

The protein localises to the cytoplasm. Its function is as follows. Exhibits a very high intrinsic GTPase hydrolysis rate. Involved in the addition of a carboxymethylaminomethyl (cmnm) group at the wobble position (U34) of certain tRNAs, forming tRNA-cmnm(5)s(2)U34. The chain is tRNA modification GTPase MnmE from Bacillus pumilus (strain SAFR-032).